The primary structure comprises 1155 residues: DNA-directed RNA polymerase subunit beta (1155 aa).

Belongs to the RNA polymerase beta chain family. As to quaternary structure, the RNAP catalytic core consists of 2 alpha, 1 beta, 1 beta' and 1 omega subunit. When a sigma factor is associated with the core the holoenzyme is formed, which can initiate transcription.

It carries out the reaction RNA(n) + a ribonucleoside 5'-triphosphate = RNA(n+1) + diphosphate. In terms of biological role, DNA-dependent RNA polymerase catalyzes the transcription of DNA into RNA using the four ribonucleoside triphosphates as substrates. The polypeptide is DNA-directed RNA polymerase subunit beta (Thermobifida fusca (strain YX)).